We begin with the raw amino-acid sequence, 204 residues long: High frequency lysogenization protein HflD homolog (204 aa).

The protein belongs to the HflD family.

The protein localises to the cytoplasm. Its subcellular location is the cell inner membrane. The protein is High frequency lysogenization protein HflD homolog of Shewanella sediminis (strain HAW-EB3).